We begin with the raw amino-acid sequence, 464 residues long: ATP synthase subunit beta (464 aa).

148–155 contacts ATP; the sequence is GGAGVGKT.

Belongs to the ATPase alpha/beta chains family. F-type ATPases have 2 components, CF(1) - the catalytic core - and CF(0) - the membrane proton channel. CF(1) has five subunits: alpha(3), beta(3), gamma(1), delta(1), epsilon(1). CF(0) has three main subunits: a(1), b(2) and c(9-12). The alpha and beta chains form an alternating ring which encloses part of the gamma chain. CF(1) is attached to CF(0) by a central stalk formed by the gamma and epsilon chains, while a peripheral stalk is formed by the delta and b chains.

The protein resides in the cell inner membrane. It carries out the reaction ATP + H2O + 4 H(+)(in) = ADP + phosphate + 5 H(+)(out). Its function is as follows. Produces ATP from ADP in the presence of a proton gradient across the membrane. The catalytic sites are hosted primarily by the beta subunits. This chain is ATP synthase subunit beta, found in Marinobacter nauticus (strain ATCC 700491 / DSM 11845 / VT8) (Marinobacter aquaeolei).